Consider the following 50-residue polypeptide: DNA replication protein repEA (50 aa).

Its function is as follows. Involved in T4 DNA replication. Binds to ssDNA. The polypeptide is DNA replication protein repEA (repEA) (Enterobacteria phage T4 (Bacteriophage T4)).